Reading from the N-terminus, the 382-residue chain is GTPase Obg (382 aa).

The region spanning 2 to 161 (VKFADESKIR…REIIVELNII (160 aa)) is the Obg domain. The region spanning 162–328 (ADIGLVGFPN…VKKAFIRLAD (167 aa)) is the OBG-type G domain. Residues 168-175 (GFPNAGKS), 193-197 (FTTKI), 215-218 (DIPG), 282-285 (TKLD), and 309-311 (SLY) contribute to the GTP site. Mg(2+) is bound by residues Ser-175 and Thr-195. Residues 360–382 (EEKNDDEHFGATVSLSRKRKPKK) are disordered.

Belongs to the TRAFAC class OBG-HflX-like GTPase superfamily. OBG GTPase family. As to quaternary structure, monomer. Requires Mg(2+) as cofactor.

Its subcellular location is the cytoplasm. An essential GTPase which binds GTP, GDP and possibly (p)ppGpp with moderate affinity, with high nucleotide exchange rates and a fairly low GTP hydrolysis rate. Plays a role in control of the cell cycle, stress response, ribosome biogenesis and in those bacteria that undergo differentiation, in morphogenesis control. In Treponema denticola (strain ATCC 35405 / DSM 14222 / CIP 103919 / JCM 8153 / KCTC 15104), this protein is GTPase Obg.